A 147-amino-acid polypeptide reads, in one-letter code: Hordoindoline-B1 (147 aa).

Residues 1–19 form the signal peptide; sequence MKTLFLLAILALVASTTFA. The propeptide occupies 20–28; the sequence is QYSVGGGYN.

In terms of processing, five disulfide bonds are present. Found in endosperm and aleurone layer of developing kernels, but not in the embryo.

It localises to the membrane. It is found in the secreted. Its subcellular location is the extracellular space. In terms of biological role, acts as a membranotoxin, probably through its antibacterial and antifungal activities, contributing to the defense mechanism of the plant against predators. Forms monovalent cation-selective ion channels in membranes. Contributes to grain texture and hardness. This chain is Hordoindoline-B1 (HINB-1), found in Hordeum vulgare (Barley).